The sequence spans 386 residues: Adiponectin receptor protein 2 (386 aa).

Residues 1-71 are disordered; the sequence is MNEPTENRLG…HEYSDEAPQE (71 aa). Residues 1-147 lie on the Cytoplasmic side of the membrane; the sequence is MNEPTENRLG…SIFRIHTETG (147 aa). The segment covering 15-41 has biased composition (basic and acidic residues); it reads PEPDIRLRKGHQLDGTRRGDNDSHQGD. A helical transmembrane segment spans residues 148-168; that stretch reads NIWTHLLGCVFFLCLGIFYMF. Topologically, residues 169–181 are extracellular; it reads RPNISFVAPLQEK. Residues 182–202 form a helical membrane-spanning segment; the sequence is VVFGLFFLGAILCLSFSWLFH. H202 is a binding site for Zn(2+). Residues 203–213 are Cytoplasmic-facing; that stretch reads TVYCHSEGVSR. Residues 214-234 form a helical membrane-spanning segment; the sequence is LFSKLDYSGIALLIMGSFVPW. Over 235 to 245 the chain is Extracellular; the sequence is LYYSFYCNPQP. The helical transmembrane segment at 246–266 threads the bilayer; sequence CFIYLIVICVLGIAAIIVSQW. The Cytoplasmic segment spans residues 267-273; that stretch reads DMFATPQ. A helical transmembrane segment spans residues 274-294; the sequence is YRGVRAGVFLGLGLSGIIPTL. Residues 295-309 are Extracellular-facing; that stretch reads HYVISEGFLKAATIG. Residues 310–330 traverse the membrane as a helical segment; it reads QIGWLMLMASLYITGAALYAA. At 331–348 the chain is on the cytoplasmic side; that stretch reads RIPERFFPGKCDIWFHSH. Zn(2+) contacts are provided by H348 and H352. A helical membrane pass occupies residues 349–369; that stretch reads QLFHIFVVAGAFVHFHGVSNL. Topologically, residues 370-386 are extracellular; it reads QEFRFMIGGGCSEEDAL.

This sequence belongs to the ADIPOR family. In terms of assembly, may form homooligomers and heterooligomers with ADIPOR1. Interacts with APPL2 (via BAR domain); ADIPOQ dissociates this interaction. As to expression, ubiquitous. Highly expressed in skeletal muscle, liver and placenta. Weakly expressed in brain, heart, colon, spleen, kidney, thymus, small intestine, peripheral blood leukocytes and lung.

It is found in the cell membrane. Receptor for ADIPOQ, an essential hormone secreted by adipocytes that regulates glucose and lipid metabolism. Required for normal body fat and glucose homeostasis. ADIPOQ-binding activates a signaling cascade that leads to increased PPARA activity, and ultimately to increased fatty acid oxidation and glucose uptake. Has intermediate affinity for globular and full-length adiponectin. Required for normal revascularization after chronic ischemia caused by severing of blood vessels. The protein is Adiponectin receptor protein 2 of Homo sapiens (Human).